We begin with the raw amino-acid sequence, 343 residues long: Cytoplasmic tRNA 2-thiolation protein 1 (343 aa).

Belongs to the TtcA family. CTU1/NCS6/ATPBD3 subfamily.

The protein localises to the cytoplasm. It participates in tRNA modification; 5-methoxycarbonylmethyl-2-thiouridine-tRNA biosynthesis. Its function is as follows. Plays a central role in 2-thiolation of mcm(5)S(2)U at tRNA wobble positions of tRNA(Lys), tRNA(Glu) and tRNA(Gln). Directly binds tRNAs and probably acts by catalyzing adenylation of tRNAs, an intermediate required for 2-thiolation. It is unclear whether it acts as a sulfurtransferase that transfers sulfur from thiocarboxylated URM1 onto the uridine of tRNAs at wobble position. The protein is Cytoplasmic tRNA 2-thiolation protein 1 of Drosophila pseudoobscura pseudoobscura (Fruit fly).